The following is a 99-amino-acid chain: Nucleoid-associated protein SSU98_0195 (99 aa).

Belongs to the YbaB/EbfC family. Homodimer.

Its subcellular location is the cytoplasm. The protein localises to the nucleoid. Binds to DNA and alters its conformation. May be involved in regulation of gene expression, nucleoid organization and DNA protection. The sequence is that of Nucleoid-associated protein SSU98_0195 from Streptococcus suis (strain 98HAH33).